The primary structure comprises 261 residues: Thiazole synthase (261 aa).

Lys95 serves as the catalytic Schiff-base intermediate with DXP. 1-deoxy-D-xylulose 5-phosphate contacts are provided by residues Gly156, Ala182 to Gly183, and Asn204 to Thr205.

It belongs to the ThiG family. As to quaternary structure, homotetramer. Forms heterodimers with either ThiH or ThiS.

Its subcellular location is the cytoplasm. It carries out the reaction [ThiS sulfur-carrier protein]-C-terminal-Gly-aminoethanethioate + 2-iminoacetate + 1-deoxy-D-xylulose 5-phosphate = [ThiS sulfur-carrier protein]-C-terminal Gly-Gly + 2-[(2R,5Z)-2-carboxy-4-methylthiazol-5(2H)-ylidene]ethyl phosphate + 2 H2O + H(+). Its pathway is cofactor biosynthesis; thiamine diphosphate biosynthesis. In terms of biological role, catalyzes the rearrangement of 1-deoxy-D-xylulose 5-phosphate (DXP) to produce the thiazole phosphate moiety of thiamine. Sulfur is provided by the thiocarboxylate moiety of the carrier protein ThiS. In vitro, sulfur can be provided by H(2)S. This is Thiazole synthase from Pectobacterium atrosepticum (strain SCRI 1043 / ATCC BAA-672) (Erwinia carotovora subsp. atroseptica).